The chain runs to 508 residues: TATA box-binding protein-like 1 (508 aa).

Disordered regions lie at residues 145-190, 236-262, and 456-479; these read QISY…QMHH, EPIP…PMPD, and QKKR…FDDS.

This sequence belongs to the TBP family.

It is found in the nucleus. In terms of biological role, may be a general transcription factor. Plays an essential role for RNA polymerase II/ama-1 transcription in early embryos whereby it activates a subset of RNA polymerase II promoters and facilitates the reestablishment of transcription after mitosis. The sequence is that of TATA box-binding protein-like 1 from Caenorhabditis elegans.